We begin with the raw amino-acid sequence, 117 residues long: MAQNSVSLSAGDQANRMAHRSSQGDLNPSAMAWAMVSGDSFLVTRLDPNQPGPRPPARPSVRADRRRVPVGGRSRSRSRQGRFSPYPIPGVKLDLLRSVLQQRLVALGTALATRISA.

The segment covering 1–12 (MAQNSVSLSAGD) has biased composition (polar residues). 2 disordered regions span residues 1 to 30 (MAQN…NPSA) and 43 to 87 (VTRL…SPYP).

This is an uncharacterized protein from Mus musculus (Mouse).